The following is a 79-amino-acid chain: Large ribosomal subunit protein bL31c (79 aa).

Belongs to the bacterial ribosomal protein bL31 family. Type A subfamily. As to quaternary structure, part of the 50S ribosomal subunit.

Its subcellular location is the plastid. The protein localises to the chloroplast. Functionally, binds the 23S rRNA. The protein is Large ribosomal subunit protein bL31c of Gracilaria tenuistipitata var. liui (Red alga).